A 253-amino-acid chain; its full sequence is HTH-type transcriptional regulator YdeO (253 aa).

The 97-residue stretch at 137-233 (GKVRNIVNMK…GNSPKRVSKE (97 aa)) folds into the HTH araC/xylS-type domain. 2 DNA-binding regions (H-T-H motif) span residues 154-175 (KDICDCLYISESLLKKKLKQEQ) and 200-223 (VNKIAEQCGYASTSYFIYAFRKHF).

Its function is as follows. Induces the expression of gadE. Could also regulate the expression of other genes involved in acid resistance. This Shigella flexneri protein is HTH-type transcriptional regulator YdeO (ydeO).